The chain runs to 318 residues: Pyrimidine-specific ribonucleoside hydrolase RihA (318 aa).

H240 is a catalytic residue.

The protein belongs to the IUNH family. RihA subfamily.

Hydrolyzes cytidine or uridine to ribose and cytosine or uracil, respectively. This chain is Pyrimidine-specific ribonucleoside hydrolase RihA, found in Shewanella baltica (strain OS185).